The following is a 428-amino-acid chain: Proline--tRNA ligase (428 aa).

This sequence belongs to the class-II aminoacyl-tRNA synthetase family. ProS type 2 subfamily. Homodimer.

It localises to the cytoplasm. The enzyme catalyses tRNA(Pro) + L-proline + ATP = L-prolyl-tRNA(Pro) + AMP + diphosphate. Its function is as follows. Catalyzes the attachment of proline to tRNA(Pro) in a two-step reaction: proline is first activated by ATP to form Pro-AMP and then transferred to the acceptor end of tRNA(Pro). The sequence is that of Proline--tRNA ligase from Rickettsia typhi (strain ATCC VR-144 / Wilmington).